The primary structure comprises 452 residues: uncharacterized protein (452 aa).

Its subcellular location is the cytoplasm. The protein localises to the nucleus. This is an uncharacterized protein from Schizosaccharomyces pombe (strain 972 / ATCC 24843) (Fission yeast).